The chain runs to 446 residues: DNA repair protein RadA (446 aa).

The segment at 10–27 adopts a C4-type zinc-finger fold; the sequence is CQACGNQQSKWLGKCPDC. 96–103 provides a ligand contact to ATP; the sequence is GSPGVGKS. A RadA KNRFG motif motif is present at residues 253 to 257; it reads KNRFG. A lon-protease-like region spans residues 349 to 446; the sequence is DVFVNISGGV…KELSQVLEWM (98 aa).

This sequence belongs to the RecA family. RadA subfamily.

DNA-dependent ATPase involved in processing of recombination intermediates, plays a role in repairing DNA breaks. Stimulates the branch migration of RecA-mediated strand transfer reactions, allowing the 3' invading strand to extend heteroduplex DNA faster. Binds ssDNA in the presence of ADP but not other nucleotides, has ATPase activity that is stimulated by ssDNA and various branched DNA structures, but inhibited by SSB. Does not have RecA's homology-searching function. The chain is DNA repair protein RadA from Campylobacter jejuni subsp. jejuni serotype O:2 (strain ATCC 700819 / NCTC 11168).